The sequence spans 1172 residues: Thrombospondin-2 (1172 aa).

The signal sequence occupies residues 1 to 18 (MVWRLVLLALWVWPSTQA). One can recognise a Laminin G-like domain in the interval 19 to 215 (GHQDKDTTFD…LQNVHLVFEN (197 aa)). Residues 19–232 (GHQDKDTTFD…KKGCQQGQGA (214 aa)) are heparin-binding. Residues asparagine 151, asparagine 316, and asparagine 330 are each glycosylated (N-linked (GlcNAc...) asparagine). The 58-residue stretch at 318–375 (SACWQDGRFFAENETWVVDSCTTCTCKKFKTICHQITCPPATCASPSFVEGECCPSCL) folds into the VWFC domain. TSP type-1 domains lie at 381–431 (EEGW…SKCD), 437–492 (DGGW…APCP), and 494–549 (DGRW…RSCP). Disulfide bonds link cysteine 393-cysteine 425, cysteine 397-cysteine 430, cysteine 408-cysteine 415, cysteine 449-cysteine 486, cysteine 453-cysteine 491, cysteine 464-cysteine 476, cysteine 506-cysteine 543, cysteine 510-cysteine 548, cysteine 521-cysteine 533, cysteine 553-cysteine 564, cysteine 558-cysteine 574, cysteine 577-cysteine 588, cysteine 594-cysteine 610, cysteine 601-cysteine 619, cysteine 622-cysteine 646, cysteine 652-cysteine 665, cysteine 659-cysteine 678, cysteine 680-cysteine 691, cysteine 707-cysteine 715, cysteine 720-cysteine 740, cysteine 756-cysteine 776, cysteine 779-cysteine 799, cysteine 815-cysteine 835, cysteine 838-cysteine 858, cysteine 876-cysteine 896, cysteine 912-cysteine 932, and cysteine 948-cysteine 1169. N-linked (GlcNAc...) asparagine glycosylation occurs at asparagine 457. The EGF-like 1 domain maps to 549–589 (PVDGCLSNPCFPGAQCSSFPDGSWSCGSCPVGFLGNGTHCE). An N-linked (GlcNAc...) asparagine glycan is attached at asparagine 584. One can recognise an EGF-like 2 domain in the interval 648 to 692 (PENPCKDKTHNCHKHAECIYLGHFSDPMYKCECQTGYAGDGLICG). TSP type-3 repeat units follow at residues 693–728 (EDSDLDGWPNLNLVCATNATYHCIKDNCPHLPNSGQ), 729–764 (EDFDKDGIGDACDDDDDNDGVTDEKDNCQLLFNPRQ), 765–787 (ADYDKDEVGDRCDNCPYVHNPAQ), 788–823 (IDTDNNGEGDACSVDIDGDDVFNERDNCPYVYNTDQ), 824–846 (RDTDGDGVGDHCDNCPLVHNPDQ), 847–884 (TDVDNDLVGDQCDNNEDIDDDGHQNNQDNCPYISNANQ), 885–920 (ADHDRDGQGDACDPDDDNDGVPDDRDNCRLVFNPDQ), and 921–956 (EDLDGDGRGDICKDDFDNDNIPDIDDVCPENNAISE). The N-linked (GlcNAc...) asparagine glycan is linked to asparagine 710. Residues 843 to 931 (NPDQTDVDND…DLDGDGRGDI (89 aa)) form a disordered region. Residues 847 to 866 (TDVDNDLVGDQCDNNEDIDD) show a composition bias toward acidic residues. A compositionally biased stretch (polar residues) spans 870 to 884 (QNNQDNCPYISNANQ). Over residues 896–905 (CDPDDDNDGV) the composition is skewed to acidic residues. Positions 928-930 (RGD) match the Cell attachment site motif. A TSP C-terminal domain is found at 960–1172 (RNFQMVPLDP…SDLKYECRDI (213 aa)). Residue asparagine 1069 is glycosylated (N-linked (GlcNAc...) asparagine).

Belongs to the thrombospondin family. Homotrimer; disulfide-linked. Interacts (via the TSP type I repeats) with CD36; the interaction conveys an antiangiogenic effect. Interacts (via the TSP type I repeats) with HRG; the interaction blocks the antiangiogenic effect of THBS2 with CD36. Can bind to fibrinogen, fibronectin, laminin and type V collagen. As to expression, high expression in invertebral disk tissue.

In terms of biological role, adhesive glycoprotein that mediates cell-to-cell and cell-to-matrix interactions. Ligand for CD36 mediating antiangiogenic properties. The polypeptide is Thrombospondin-2 (THBS2) (Homo sapiens (Human)).